Here is a 195-residue protein sequence, read N- to C-terminus: Large ribosomal subunit protein uL18 (195 aa).

This sequence belongs to the universal ribosomal protein uL18 family. Part of the 50S ribosomal subunit. Contacts the 5S and 23S rRNAs.

Its function is as follows. This is one of the proteins that bind and probably mediate the attachment of the 5S RNA into the large ribosomal subunit, where it forms part of the central protuberance. This Methanococcus vannielii protein is Large ribosomal subunit protein uL18.